We begin with the raw amino-acid sequence, 494 residues long: Sulfate adenylyltransferase subunit 1 (494 aa).

The tr-type G domain occupies 24 to 240; sequence TRPLRLITCG…LELATVRSAQ (217 aa). The interval 33–40 is G1; the sequence is GSVDDGKS. 33–40 lines the GTP pocket; sequence GSVDDGKS. Residues 91 to 95 form a G2 region; that stretch reads GITID. Residues 112 to 115 form a G3 region; the sequence is DTPG. GTP contacts are provided by residues 112 to 116 and 167 to 170; these read DTPGH and NKID. The segment at 167–170 is G4; it reads NKID. The segment at 204-206 is G5; the sequence is SAL.

It belongs to the TRAFAC class translation factor GTPase superfamily. Classic translation factor GTPase family. CysN/NodQ subfamily. In terms of assembly, heterodimer composed of CysD, the smaller subunit, and CysN.

The catalysed reaction is sulfate + ATP + H(+) = adenosine 5'-phosphosulfate + diphosphate. It participates in sulfur metabolism; hydrogen sulfide biosynthesis; sulfite from sulfate: step 1/3. In terms of biological role, with CysD forms the ATP sulfurylase (ATPS) that catalyzes the adenylation of sulfate producing adenosine 5'-phosphosulfate (APS) and diphosphate, the first enzymatic step in sulfur assimilation pathway. APS synthesis involves the formation of a high-energy phosphoric-sulfuric acid anhydride bond driven by GTP hydrolysis by CysN coupled to ATP hydrolysis by CysD. The sequence is that of Sulfate adenylyltransferase subunit 1 from Rhizobium rhizogenes (strain K84 / ATCC BAA-868) (Agrobacterium radiobacter).